The sequence spans 339 residues: Cathepsin B (339 aa).

A signal peptide spans 1–17 (MWQLWASLCCLLALADA). A propeptide spans 18–79 (RSRPSFHPLS…QRVMFTEDLK (62 aa)) (activation peptide). 6 disulfide bridges follow: Cys-93-Cys-122, Cys-105-Cys-150, Cys-141-Cys-207, Cys-142-Cys-146, Cys-179-Cys-211, and Cys-187-Cys-198. Cys-108 is an active-site residue. A glycan (N-linked (GlcNAc...) asparagine) is linked at Asn-192. Lys-220 bears the N6-acetyllysine mark. Catalysis depends on residues His-278 and Asn-298. A propeptide spanning residues 334-339 (QYWEKI) is cleaved from the precursor.

This sequence belongs to the peptidase C1 family. As to quaternary structure, dimer of a heavy chain and a light chain cross-linked by a disulfide bond. Interacts with SRPX2. Directly interacts with SHKBP1.

The protein resides in the lysosome. Its subcellular location is the melanosome. It is found in the secreted. It localises to the extracellular space. The protein localises to the apical cell membrane. The enzyme catalyses Hydrolysis of proteins with broad specificity for peptide bonds. Preferentially cleaves -Arg-Arg-|-Xaa bonds in small molecule substrates (thus differing from cathepsin L). In addition to being an endopeptidase, shows peptidyl-dipeptidase activity, liberating C-terminal dipeptides.. Thiol protease which is believed to participate in intracellular degradation and turnover of proteins. Cleaves matrix extracellular phosphoglycoprotein MEPE. Involved in the solubilization of cross-linked TG/thyroglobulin in the thyroid follicle lumen. Has also been implicated in tumor invasion and metastasis. The polypeptide is Cathepsin B (CTSB) (Pongo abelii (Sumatran orangutan)).